A 988-amino-acid polypeptide reads, in one-letter code: Transposase for transposon Tn1546 (988 aa).

This sequence belongs to the transposase 7 family.

Functionally, required for transposition of transposon Tn1546. This Enterococcus faecium (Streptococcus faecium) protein is Transposase for transposon Tn1546.